The following is a 295-amino-acid chain: Secreted frizzled-related protein 2 (295 aa).

The N-terminal stretch at 1–24 (MLQGPGSLLLLFLASHCCLGSARG) is a signal peptide. The FZ domain maps to 35–155 (YKRSNCKPIP…PQDNDLCIPL (121 aa)). Disulfide bonds link Cys40/Cys103, Cys50/Cys96, Cys87/Cys125, Cys114/Cys152, Cys118/Cys142, Cys172/Cys245, Cys175/Cys247, and Cys190/Cys295. Positions 172 to 295 (CEACKNKNDD…ISRSIRKLQC (124 aa)) constitute an NTR domain.

It belongs to the secreted frizzled-related protein (sFRP) family. In terms of tissue distribution, expressed in adipose tissue, heart, brain, skeletal muscle, pancreas, thymus, prostate, testis, ovary, small intestine and colon. Highest levels in adipose tissue, small intestine and colon.

The protein resides in the secreted. Soluble frizzled-related proteins (sFRPS) function as modulators of Wnt signaling through direct interaction with Wnts. They have a role in regulating cell growth and differentiation in specific cell types. SFRP2 may be important for eye retinal development and for myogenesis. The chain is Secreted frizzled-related protein 2 (SFRP2) from Homo sapiens (Human).